A 345-amino-acid polypeptide reads, in one-letter code: Methylthioribose-1-phosphate isomerase (345 aa).

Residues 44 to 46 (RGA), R86, and Q194 contribute to the substrate site. The Proton donor role is filled by D235. Residue 245-246 (NK) participates in substrate binding.

Belongs to the eIF-2B alpha/beta/delta subunits family. MtnA subfamily.

It carries out the reaction 5-(methylsulfanyl)-alpha-D-ribose 1-phosphate = 5-(methylsulfanyl)-D-ribulose 1-phosphate. The protein operates within amino-acid biosynthesis; L-methionine biosynthesis via salvage pathway; L-methionine from S-methyl-5-thio-alpha-D-ribose 1-phosphate: step 1/6. Catalyzes the interconversion of methylthioribose-1-phosphate (MTR-1-P) into methylthioribulose-1-phosphate (MTRu-1-P). This Desulfitobacterium hafniense (strain DSM 10664 / DCB-2) protein is Methylthioribose-1-phosphate isomerase.